The primary structure comprises 293 residues: uncharacterized protein (293 aa).

Residue Glu-47 is part of the active site.

It belongs to the PhzF family.

This is an uncharacterized protein from Bacillus subtilis (strain 168).